Consider the following 284-residue polypeptide: Bifunctional protein FolD (284 aa).

NADP(+) contacts are provided by residues 166 to 168 (GAS) and isoleucine 232.

It belongs to the tetrahydrofolate dehydrogenase/cyclohydrolase family. As to quaternary structure, homodimer.

It catalyses the reaction (6R)-5,10-methylene-5,6,7,8-tetrahydrofolate + NADP(+) = (6R)-5,10-methenyltetrahydrofolate + NADPH. It carries out the reaction (6R)-5,10-methenyltetrahydrofolate + H2O = (6R)-10-formyltetrahydrofolate + H(+). Its pathway is one-carbon metabolism; tetrahydrofolate interconversion. Functionally, catalyzes the oxidation of 5,10-methylenetetrahydrofolate to 5,10-methenyltetrahydrofolate and then the hydrolysis of 5,10-methenyltetrahydrofolate to 10-formyltetrahydrofolate. The sequence is that of Bifunctional protein FolD from Glaesserella parasuis serovar 5 (strain SH0165) (Haemophilus parasuis).